A 320-amino-acid chain; its full sequence is ATP-dependent 6-phosphofructokinase (320 aa).

Residue Gly12 coordinates ATP. 22–26 contacts ADP; sequence RGVVR. Residues 73–74 and 103–106 each bind ATP; these read RF and GDGS. Asp104 serves as a coordination point for Mg(2+). 126-128 contacts substrate; that stretch reads TID. Asp128 (proton acceptor) is an active-site residue. An ADP-binding site is contributed by Arg155. Residues Arg163 and 170–172 each bind substrate; that span reads MGR. Residues 186-188, Lys212, and 214-216 each bind ADP; these read GCE and KKH. Residues Glu223, Arg244, and 250–253 each bind substrate; that span reads HIQR.

It belongs to the phosphofructokinase type A (PFKA) family. ATP-dependent PFK group I subfamily. Prokaryotic clade 'B1' sub-subfamily. Homotetramer. Requires Mg(2+) as cofactor.

The protein localises to the cytoplasm. It catalyses the reaction beta-D-fructose 6-phosphate + ATP = beta-D-fructose 1,6-bisphosphate + ADP + H(+). It functions in the pathway carbohydrate degradation; glycolysis; D-glyceraldehyde 3-phosphate and glycerone phosphate from D-glucose: step 3/4. Allosterically activated by ADP and other diphosphonucleosides, and allosterically inhibited by phosphoenolpyruvate. Functionally, catalyzes the phosphorylation of D-fructose 6-phosphate to fructose 1,6-bisphosphate by ATP, the first committing step of glycolysis. The protein is ATP-dependent 6-phosphofructokinase of Aliivibrio fischeri (strain ATCC 700601 / ES114) (Vibrio fischeri).